A 102-amino-acid chain; its full sequence is Guanyl-specific ribonuclease Pc (102 aa).

2 cysteine pairs are disulfide-bonded: cysteine 2–cysteine 10 and cysteine 6–cysteine 101. Residue histidine 38 is part of the active site. Glutamate 56 functions as the Proton acceptor in the catalytic mechanism. Residue histidine 90 is the Proton donor of the active site.

It belongs to the ribonuclease N1/T1 family.

The enzyme catalyses [RNA] containing guanosine + H2O = an [RNA fragment]-3'-guanosine-3'-phosphate + a 5'-hydroxy-ribonucleotide-3'-[RNA fragment].. The sequence is that of Guanyl-specific ribonuclease Pc from Penicillium chrysogenum (Penicillium notatum).